We begin with the raw amino-acid sequence, 452 residues long: tRNA modification GTPase MnmE (452 aa).

Arg22, Glu80, and Lys119 together coordinate (6S)-5-formyl-5,6,7,8-tetrahydrofolate. In terms of domain architecture, TrmE-type G spans 213-375; sequence GVRTVIVGKP…LENKIYEKFF (163 aa). A K(+)-binding site is contributed by Asn223. Residues 223 to 228, 242 to 248, and 267 to 270 each bind GTP; these read NSGKST, TDIPGTT, and DTAG. Ser227 lines the Mg(2+) pocket. Residues Thr242, Ile244, and Thr247 each coordinate K(+). Position 248 (Thr248) interacts with Mg(2+). (6S)-5-formyl-5,6,7,8-tetrahydrofolate is bound at residue Lys452.

The protein belongs to the TRAFAC class TrmE-Era-EngA-EngB-Septin-like GTPase superfamily. TrmE GTPase family. As to quaternary structure, homodimer. Heterotetramer of two MnmE and two MnmG subunits. K(+) serves as cofactor.

The protein resides in the cytoplasm. In terms of biological role, exhibits a very high intrinsic GTPase hydrolysis rate. Involved in the addition of a carboxymethylaminomethyl (cmnm) group at the wobble position (U34) of certain tRNAs, forming tRNA-cmnm(5)s(2)U34. The sequence is that of tRNA modification GTPase MnmE from Petrotoga mobilis (strain DSM 10674 / SJ95).